The chain runs to 56 residues: Small ribosomal subunit protein uS14 (56 aa).

Residues Cys-21, Cys-24, Cys-39, and Cys-42 each contribute to the Zn(2+) site.

Belongs to the universal ribosomal protein uS14 family. As to quaternary structure, component of the small ribosomal subunit. Mature ribosomes consist of a small (40S) and a large (60S) subunit. The 40S subunit contains about 32 different proteins and 1 molecule of RNA (18S). The 60S subunit contains 45 different proteins and 3 molecules of RNA (25S, 5.8S and 5S). Zn(2+) is required as a cofactor.

Its subcellular location is the cytoplasm. Component of the ribosome, a large ribonucleoprotein complex responsible for the synthesis of proteins in the cell. The small ribosomal subunit (SSU) binds messenger RNAs (mRNAs) and translates the encoded message by selecting cognate aminoacyl-transfer RNA (tRNA) molecules. The large subunit (LSU) contains the ribosomal catalytic site termed the peptidyl transferase center (PTC), which catalyzes the formation of peptide bonds, thereby polymerizing the amino acids delivered by tRNAs into a polypeptide chain. The nascent polypeptides leave the ribosome through a tunnel in the LSU and interact with protein factors that function in enzymatic processing, targeting, and the membrane insertion of nascent chains at the exit of the ribosomal tunnel. This chain is Small ribosomal subunit protein uS14, found in Candida albicans (strain SC5314 / ATCC MYA-2876) (Yeast).